Here is a 354-residue protein sequence, read N- to C-terminus: UDP-N-acetylglucosamine--N-acetylmuramyl-(pentapeptide) pyrophosphoryl-undecaprenol N-acetylglucosamine transferase (354 aa).

UDP-N-acetyl-alpha-D-glucosamine is bound by residues 15 to 17 (TGG), asparagine 127, arginine 163, serine 191, isoleucine 244, 263 to 268 (ALTVSE), and glutamine 288.

It belongs to the glycosyltransferase 28 family. MurG subfamily.

The protein resides in the cell inner membrane. The catalysed reaction is di-trans,octa-cis-undecaprenyl diphospho-N-acetyl-alpha-D-muramoyl-L-alanyl-D-glutamyl-meso-2,6-diaminopimeloyl-D-alanyl-D-alanine + UDP-N-acetyl-alpha-D-glucosamine = di-trans,octa-cis-undecaprenyl diphospho-[N-acetyl-alpha-D-glucosaminyl-(1-&gt;4)]-N-acetyl-alpha-D-muramoyl-L-alanyl-D-glutamyl-meso-2,6-diaminopimeloyl-D-alanyl-D-alanine + UDP + H(+). Its pathway is cell wall biogenesis; peptidoglycan biosynthesis. Cell wall formation. Catalyzes the transfer of a GlcNAc subunit on undecaprenyl-pyrophosphoryl-MurNAc-pentapeptide (lipid intermediate I) to form undecaprenyl-pyrophosphoryl-MurNAc-(pentapeptide)GlcNAc (lipid intermediate II). The polypeptide is UDP-N-acetylglucosamine--N-acetylmuramyl-(pentapeptide) pyrophosphoryl-undecaprenol N-acetylglucosamine transferase (Vibrio cholerae serotype O1 (strain ATCC 39541 / Classical Ogawa 395 / O395)).